The sequence spans 326 residues: rRNA 2'-O-methyltransferase fibrillarin (326 aa).

The tract at residues 1 to 84 (MAFQPGSRGG…GGARGGAKGG (84 aa)) is disordered. A compositionally biased stretch (gly residues) spans 7–83 (SRGGRGGARG…RGGARGGAKG (77 aa)). 18 positions are modified to asymmetric dimethylarginine: arginine 8, arginine 11, arginine 15, arginine 19, arginine 23, arginine 26, arginine 32, arginine 36, arginine 39, arginine 45, arginine 49, arginine 55, arginine 59, arginine 63, arginine 67, arginine 71, arginine 74, and arginine 78. Residues 180–181 (TS), 199–200 (EF), 224–225 (DA), and 244–247 (DVAQ) contribute to the S-adenosyl-L-methionine site.

This sequence belongs to the methyltransferase superfamily. Fibrillarin family. As to quaternary structure, component of box C/D small nucleolar ribonucleoprotein (snoRNP) particles that contain SNU13, NOP1, SIK1/NOP56 and NOP58, plus a guide RNA. In terms of processing, by homology to other fibrillarins, some or all of the N-terminal domain arginines are modified to asymmetric dimethylarginine (DMA).

The protein resides in the nucleus. Its subcellular location is the nucleolus. The catalysed reaction is L-glutaminyl-[histone H2A] + S-adenosyl-L-methionine = N(5)-methyl-L-glutaminyl-[histone H2A] + S-adenosyl-L-homocysteine + H(+). S-adenosyl-L-methionine-dependent methyltransferase that has the ability to methylate both RNAs and proteins. Involved in pre-rRNA processing. Utilizes the methyl donor S-adenosyl-L-methionine to catalyze the site-specific 2'-hydroxyl methylation of ribose moieties in pre-ribosomal RNA. Site specificity is provided by a guide RNA that base pairs with the substrate. Methylation occurs at a characteristic distance from the sequence involved in base pairing with the guide RNA. Also acts as a protein methyltransferase by mediating methylation of 'Gln-105' of histone H2A (H2AQ105me), a modification that impairs binding of the FACT complex and is specifically present at 35S ribosomal DNA locus. The protein is rRNA 2'-O-methyltransferase fibrillarin (NOP1) of Eremothecium gossypii (strain ATCC 10895 / CBS 109.51 / FGSC 9923 / NRRL Y-1056) (Yeast).